The sequence spans 492 residues: uncharacterized protein (492 aa).

12 consecutive transmembrane segments (helical) span residues 16–36 (FIAF…VMTM), 39–59 (VGPF…GVVL), 107–127 (SFNG…IPVV), 133–153 (IIIG…FISL), 162–182 (AIFY…ILGI), 210–230 (IIFI…LASI), 243–263 (FLIA…IISG), 291–311 (LVGG…NSLA), 350–370 (VLIS…IPFL), 394–414 (MAAA…FMIF), 429–449 (VSYV…LFPF), and 454–474 (VFNT…VGFF).

It to M.genitalium MG225.

The protein resides in the cell membrane. This is an uncharacterized protein from Mycoplasma genitalium (strain ATCC 33530 / DSM 19775 / NCTC 10195 / G37) (Mycoplasmoides genitalium).